The sequence spans 383 residues: Probable protein phosphatase 2C 13 (383 aa).

A PPM-type phosphatase domain is found at 78–349 (RSGSFADIRS…DNMTVIVICF (272 aa)). Mn(2+) contacts are provided by aspartate 121, glycine 122, aspartate 297, and aspartate 340.

This sequence belongs to the PP2C family. The cofactor is Mg(2+). Mn(2+) serves as cofactor.

The catalysed reaction is O-phospho-L-seryl-[protein] + H2O = L-seryl-[protein] + phosphate. It catalyses the reaction O-phospho-L-threonyl-[protein] + H2O = L-threonyl-[protein] + phosphate. This Arabidopsis thaliana (Mouse-ear cress) protein is Probable protein phosphatase 2C 13.